The primary structure comprises 867 residues: Leucine--tRNA ligase (867 aa).

The 'HIGH' region motif lies at 40-51 (PYPSGAGLHVGH). Residues 638 to 642 (KMSKS) carry the 'KMSKS' region motif. Residue Lys-641 participates in ATP binding.

This sequence belongs to the class-I aminoacyl-tRNA synthetase family.

The protein resides in the cytoplasm. It carries out the reaction tRNA(Leu) + L-leucine + ATP = L-leucyl-tRNA(Leu) + AMP + diphosphate. The polypeptide is Leucine--tRNA ligase (Leptospira biflexa serovar Patoc (strain Patoc 1 / Ames)).